Here is a 356-residue protein sequence, read N- to C-terminus: UDP-N-acetylglucosamine--N-acetylmuramyl-(pentapeptide) pyrophosphoryl-undecaprenol N-acetylglucosamine transferase (356 aa).

UDP-N-acetyl-alpha-D-glucosamine-binding positions include 12–14 (TGG), Asn-124, Arg-163, Ser-188, Ile-242, and Gln-287.

This sequence belongs to the glycosyltransferase 28 family. MurG subfamily.

The protein resides in the cell inner membrane. It catalyses the reaction di-trans,octa-cis-undecaprenyl diphospho-N-acetyl-alpha-D-muramoyl-L-alanyl-D-glutamyl-meso-2,6-diaminopimeloyl-D-alanyl-D-alanine + UDP-N-acetyl-alpha-D-glucosamine = di-trans,octa-cis-undecaprenyl diphospho-[N-acetyl-alpha-D-glucosaminyl-(1-&gt;4)]-N-acetyl-alpha-D-muramoyl-L-alanyl-D-glutamyl-meso-2,6-diaminopimeloyl-D-alanyl-D-alanine + UDP + H(+). It functions in the pathway cell wall biogenesis; peptidoglycan biosynthesis. Its function is as follows. Cell wall formation. Catalyzes the transfer of a GlcNAc subunit on undecaprenyl-pyrophosphoryl-MurNAc-pentapeptide (lipid intermediate I) to form undecaprenyl-pyrophosphoryl-MurNAc-(pentapeptide)GlcNAc (lipid intermediate II). The polypeptide is UDP-N-acetylglucosamine--N-acetylmuramyl-(pentapeptide) pyrophosphoryl-undecaprenol N-acetylglucosamine transferase (Pseudomonas syringae pv. syringae (strain B728a)).